The chain runs to 114 residues: Protein yippee-like (114 aa).

A Yippee domain is found at 14 to 111 (RTYSCVHCRA…IELAHMIKEN (98 aa)). Cysteine 18, cysteine 21, cysteine 74, and cysteine 77 together coordinate Zn(2+).

The protein belongs to the yippee family.

Functionally, involved in regulating synaptic transmission in presynaptic neurons. In class IV dendritic arborization neurons (nociceptors), involved in regulating activation of their second-order neurons (SONs) and maintaining synaptic contact between nociceptors and their SONs. The sequence is that of Protein yippee-like from Drosophila melanogaster (Fruit fly).